Reading from the N-terminus, the 252-residue chain is Phosphoglycolate phosphatase (252 aa).

The active-site Nucleophile is the Asp13. Mg(2+) contacts are provided by Asp13, Asp15, and Asp192.

It belongs to the HAD-like hydrolase superfamily. CbbY/CbbZ/Gph/YieH family. Monomer. Requires Mg(2+) as cofactor. It depends on chloride as a cofactor.

The enzyme catalyses 2-phosphoglycolate + H2O = glycolate + phosphate. It functions in the pathway organic acid metabolism; glycolate biosynthesis; glycolate from 2-phosphoglycolate: step 1/1. In terms of biological role, specifically catalyzes the dephosphorylation of 2-phosphoglycolate. Is involved in the dissimilation of the intracellular 2-phosphoglycolate formed during the DNA repair of 3'-phosphoglycolate ends, a major class of DNA lesions induced by oxidative stress. The sequence is that of Phosphoglycolate phosphatase from Shigella sonnei (strain Ss046).